The following is a 326-amino-acid chain: Diaminopimelate epimerase (326 aa).

Positions 13 and 72 each coordinate substrate. Cys-81 acts as the Proton donor in catalysis. Substrate-binding positions include 82–83 (GN), Asn-169, Asn-205, and 223–224 (ER). The active-site Proton acceptor is the Cys-232. 233–234 (GT) lines the substrate pocket.

This sequence belongs to the diaminopimelate epimerase family. Homodimer.

It is found in the cytoplasm. It carries out the reaction (2S,6S)-2,6-diaminopimelate = meso-2,6-diaminopimelate. It participates in amino-acid biosynthesis; L-lysine biosynthesis via DAP pathway; DL-2,6-diaminopimelate from LL-2,6-diaminopimelate: step 1/1. Its function is as follows. Catalyzes the stereoinversion of LL-2,6-diaminopimelate (L,L-DAP) to meso-diaminopimelate (meso-DAP), a precursor of L-lysine and an essential component of the bacterial peptidoglycan. The sequence is that of Diaminopimelate epimerase from Enterococcus faecalis (strain ATCC 700802 / V583).